Consider the following 176-residue polypeptide: ATP-dependent protease subunit HslV (176 aa).

Threonine 2 is an active-site residue. 3 residues coordinate Na(+): glycine 157, cysteine 160, and threonine 163.

The protein belongs to the peptidase T1B family. HslV subfamily. As to quaternary structure, a double ring-shaped homohexamer of HslV is capped on each side by a ring-shaped HslU homohexamer. The assembly of the HslU/HslV complex is dependent on binding of ATP.

It localises to the cytoplasm. It carries out the reaction ATP-dependent cleavage of peptide bonds with broad specificity.. With respect to regulation, allosterically activated by HslU binding. Functionally, protease subunit of a proteasome-like degradation complex believed to be a general protein degrading machinery. In Pectobacterium carotovorum subsp. carotovorum (strain PC1), this protein is ATP-dependent protease subunit HslV.